Consider the following 103-residue polypeptide: Large ribosomal subunit protein uL24 (103 aa).

This sequence belongs to the universal ribosomal protein uL24 family. Part of the 50S ribosomal subunit.

Functionally, one of two assembly initiator proteins, it binds directly to the 5'-end of the 23S rRNA, where it nucleates assembly of the 50S subunit. Its function is as follows. One of the proteins that surrounds the polypeptide exit tunnel on the outside of the subunit. The protein is Large ribosomal subunit protein uL24 of Agathobacter rectalis (strain ATCC 33656 / DSM 3377 / JCM 17463 / KCTC 5835 / VPI 0990) (Eubacterium rectale).